The primary structure comprises 302 residues: UDP-3-O-acyl-N-acetylglucosamine deacetylase (302 aa).

The Zn(2+) site is built by His-78, His-237, and Asp-241. His-264 acts as the Proton donor in catalysis.

Belongs to the LpxC family. Requires Zn(2+) as cofactor.

It carries out the reaction a UDP-3-O-[(3R)-3-hydroxyacyl]-N-acetyl-alpha-D-glucosamine + H2O = a UDP-3-O-[(3R)-3-hydroxyacyl]-alpha-D-glucosamine + acetate. It participates in glycolipid biosynthesis; lipid IV(A) biosynthesis; lipid IV(A) from (3R)-3-hydroxytetradecanoyl-[acyl-carrier-protein] and UDP-N-acetyl-alpha-D-glucosamine: step 2/6. In terms of biological role, catalyzes the hydrolysis of UDP-3-O-myristoyl-N-acetylglucosamine to form UDP-3-O-myristoylglucosamine and acetate, the committed step in lipid A biosynthesis. The sequence is that of UDP-3-O-acyl-N-acetylglucosamine deacetylase from Hahella chejuensis (strain KCTC 2396).